We begin with the raw amino-acid sequence, 393 residues long: Putative N(4)-(beta-N-acetylglucosaminyl)-L-asparaginase GH22932 (393 aa).

Residues 15-41 (ALKPITNSSSDTITPNPNLITTSRGSS) are disordered. Residues 19–41 (ITNSSSDTITPNPNLITTSRGSS) are compositionally biased toward polar residues. Cystine bridges form between C100–C105 and C199–C215. T246 acts as the Nucleophile in catalysis. Substrate-binding positions include 274–277 (RVGD) and 297–300 (TGDG). C357 and C381 are oxidised to a cystine.

It belongs to the Ntn-hydrolase family. Heterotetramer of two alpha and two beta chains arranged as a dimer of alpha/beta heterodimers. Post-translationally, cleaved into an alpha and beta chain by autocatalysis; this activates the enzyme. The N-terminal residue of the beta subunit is responsible for the nucleophile hydrolase activity.

It catalyses the reaction N(4)-(beta-N-acetyl-D-glucosaminyl)-L-asparagine + H2O = N-acetyl-beta-D-glucosaminylamine + L-aspartate + H(+). Its function is as follows. Cleaves the GlcNAc-Asn bond which joins oligosaccharides to the peptide of asparagine-linked glycoproteins. The polypeptide is Putative N(4)-(beta-N-acetylglucosaminyl)-L-asparaginase GH22932 (Drosophila grimshawi (Hawaiian fruit fly)).